The chain runs to 178 residues: ATP synthase subunit b (178 aa).

The chain crosses the membrane as a helical span at residues 11–31; the sequence is IIPEPVEIVVGLVAFLLLLFV.

Belongs to the ATPase B chain family. As to quaternary structure, F-type ATPases have 2 components, F(1) - the catalytic core - and F(0) - the membrane proton channel. F(1) has five subunits: alpha(3), beta(3), gamma(1), delta(1), epsilon(1). F(0) has three main subunits: a(1), b(2) and c(10-14). The alpha and beta chains form an alternating ring which encloses part of the gamma chain. F(1) is attached to F(0) by a central stalk formed by the gamma and epsilon chains, while a peripheral stalk is formed by the delta and b chains.

Its subcellular location is the cell membrane. In terms of biological role, f(1)F(0) ATP synthase produces ATP from ADP in the presence of a proton or sodium gradient. F-type ATPases consist of two structural domains, F(1) containing the extramembraneous catalytic core and F(0) containing the membrane proton channel, linked together by a central stalk and a peripheral stalk. During catalysis, ATP synthesis in the catalytic domain of F(1) is coupled via a rotary mechanism of the central stalk subunits to proton translocation. Its function is as follows. Component of the F(0) channel, it forms part of the peripheral stalk, linking F(1) to F(0). The polypeptide is ATP synthase subunit b (Saccharopolyspora erythraea (strain ATCC 11635 / DSM 40517 / JCM 4748 / NBRC 13426 / NCIMB 8594 / NRRL 2338)).